A 330-amino-acid polypeptide reads, in one-letter code: Stearoyl-CoA desaturase 5 (330 aa).

Residues 1-49 lie on the Cytoplasmic side of the membrane; sequence MPGPATDAGKIPFCDAKEEIRAGLESSEGGGGPERPGARGQRQNIVWRN. Residue Asn-49 participates in substrate binding. The chain crosses the membrane as a helical span at residues 50–70; the sequence is VVLMSLLHLGAVYSLVLIPKA. Topologically, residues 71–72 are lumenal; the sequence is KP. The helical transmembrane segment at 73–93 threads the bilayer; the sequence is LTLLWAYFCFLLAALGVTAGA. Positions 94 and 99 each coordinate Fe cation. The short motif at 94 to 99 is the Histidine box-1 element; that stretch reads HRLWSH. Over 94 to 193 the chain is Cytoplasmic; that stretch reads HRLWSHRSYR…VVRIQRKYYK (100 aa). Residues Asn-122, Arg-129, and Asp-130 each contribute to the substrate site. Residues His-131, His-134, and His-135 each coordinate Fe cation. The Histidine box-2 motif lies at 131 to 135; it reads HRAHH. Arg-162 and Lys-163 together coordinate substrate. A helical membrane pass occupies residues 194–214; it reads ISVVLMCFVVPTLVPWYIWGE. Residue Ser-215 is a topological domain, lumenal. The helical transmembrane segment at 216–238 threads the bilayer; it reads LWNSYFLASILRYTISLNISWLV. Trp-236 contacts substrate. Residues 239 to 330 are Cytoplasmic-facing; sequence NSAAHMYGNR…RKARTGDSSA (92 aa). Residues His-243, His-272, His-275, and His-276 each contribute to the Fe cation site. The Histidine box-3 signature appears at 272-276; that stretch reads HNYHH.

It belongs to the fatty acid desaturase type 1 family. May self-associate and form homodimers. Fe(2+) serves as cofactor. In terms of tissue distribution, detected in fetal brain, and at lower levels in fetal kidney. Detected in adult brain and pancreas, and at lower levels in kidney and lung. Expressed in spiral ganglion cells and the organ of Corti of fetal cochlea.

It is found in the endoplasmic reticulum membrane. It carries out the reaction octadecanoyl-CoA + 2 Fe(II)-[cytochrome b5] + O2 + 2 H(+) = (9Z)-octadecenoyl-CoA + 2 Fe(III)-[cytochrome b5] + 2 H2O. It catalyses the reaction hexadecanoyl-CoA + 2 Fe(II)-[cytochrome b5] + O2 + 2 H(+) = (9Z)-hexadecenoyl-CoA + 2 Fe(III)-[cytochrome b5] + 2 H2O. Stearoyl-CoA desaturase that utilizes O(2) and electrons from reduced cytochrome b5 to introduce the first double bond into saturated fatty acyl-CoA substrates. Catalyzes the insertion of a cis double bond at the delta-9 position into fatty acyl-CoA substrates including palmitoyl-CoA and stearoyl-CoA. Gives rise to a mixture of 16:1 and 18:1 unsaturated fatty acids. Involved in neuronal cell proliferation and differentiation through down-regulation of EGFR/AKT/MAPK and Wnt signaling pathways. The protein is Stearoyl-CoA desaturase 5 (SCD5) of Homo sapiens (Human).